A 1164-amino-acid polypeptide reads, in one-letter code: DNA-directed RNA polymerase subunit beta (1164 aa).

2 disordered regions span residues Arg975–Asn994 and Ala1143–Ser1164. Composition is skewed to basic and acidic residues over residues Arg981–Gly991 and Ser1152–Ser1164.

The protein belongs to the RNA polymerase beta chain family. In terms of assembly, the RNAP catalytic core consists of 2 alpha, 1 beta, 1 beta' and 1 omega subunit. When a sigma factor is associated with the core the holoenzyme is formed, which can initiate transcription.

The catalysed reaction is RNA(n) + a ribonucleoside 5'-triphosphate = RNA(n+1) + diphosphate. In terms of biological role, DNA-dependent RNA polymerase catalyzes the transcription of DNA into RNA using the four ribonucleoside triphosphates as substrates. The protein is DNA-directed RNA polymerase subunit beta of Corynebacterium jeikeium (strain K411).